A 132-amino-acid chain; its full sequence is UPF0292 protein PH1700 (132 aa).

Residues glutamate 20–leucine 100 form the Toprim domain. Glutamate 26, aspartate 69, and aspartate 71 together coordinate Mg(2+).

Belongs to the UPF0292 family. Mg(2+) is required as a cofactor.

This chain is UPF0292 protein PH1700, found in Pyrococcus horikoshii (strain ATCC 700860 / DSM 12428 / JCM 9974 / NBRC 100139 / OT-3).